A 46-amino-acid chain; its full sequence is Protein krueppel (46 aa).

3 consecutive C2H2-type zinc fingers follow at residues 1–4 (MRLH), 10–32 (YQCL…LRVH), and 38–46 (YACEICPSR).

It belongs to the krueppel C2H2-type zinc-finger protein family.

Its subcellular location is the nucleus. Krueppel is a gap class segmentation protein. This chain is Protein krueppel (Kr), found in Pholcus phalangioides (Longbodied cellar spider).